The sequence spans 361 residues: Polygalacturonase (361 aa).

Residues 1–18 (MISANSLLISTLCAFAIA) form the signal peptide. Cys-27 and Cys-43 are disulfide-bonded. PbH1 repeat units follow at residues 155–185 (CSDLTISDITIDIRDGDSAGGHNTDGFDVGS), 186–207 (SSNVLIQGCTVYNQDDCIAVNS), 208–228 (GSTIKFMNNYCYNGHGISVGS), 237–258 (VNGFWAENNHVINSDNGLRIKT), and 266–288 (VTNVNFISNKISGIKSYGIVIEG). Asp-200 acts as the Proton donor in catalysis. A disulfide bond links Cys-202 and Cys-218. His-222 is an active-site residue. N-linked (GlcNAc...) asparagine glycans are attached at residues Asn-318 and Asn-330. A disulfide bond links Cys-350 and Cys-361.

The protein belongs to the glycosyl hydrolase 28 family.

It carries out the reaction (1,4-alpha-D-galacturonosyl)n+m + H2O = (1,4-alpha-D-galacturonosyl)n + (1,4-alpha-D-galacturonosyl)m.. The protein is Polygalacturonase (PGU1) of Saccharomyces cerevisiae (strain ATCC 204508 / S288c) (Baker's yeast).